The sequence spans 143 residues: Small ribosomal subunit protein eS12 (143 aa).

Belongs to the eukaryotic ribosomal protein eS12 family. As to quaternary structure, component of the small ribosomal subunit. Mature ribosomes consist of a small (40S) and a large (60S) subunit. The 40S subunit contains about 32 different proteins and 1 molecule of RNA (18S). The 60S subunit contains 45 different proteins and 3 molecules of RNA (25S, 5.8S and 5S).

The protein localises to the cytoplasm. Its function is as follows. Component of the ribosome, a large ribonucleoprotein complex responsible for the synthesis of proteins in the cell. The small ribosomal subunit (SSU) binds messenger RNAs (mRNAs) and translates the encoded message by selecting cognate aminoacyl-transfer RNA (tRNA) molecules. The large subunit (LSU) contains the ribosomal catalytic site termed the peptidyl transferase center (PTC), which catalyzes the formation of peptide bonds, thereby polymerizing the amino acids delivered by tRNAs into a polypeptide chain. The nascent polypeptides leave the ribosome through a tunnel in the LSU and interact with protein factors that function in enzymatic processing, targeting, and the membrane insertion of nascent chains at the exit of the ribosomal tunnel. This Candida albicans (strain SC5314 / ATCC MYA-2876) (Yeast) protein is Small ribosomal subunit protein eS12 (RPS12).